Reading from the N-terminus, the 133-residue chain is uncharacterized protein (133 aa).

This is an uncharacterized protein from Rickettsia conorii (strain ATCC VR-613 / Malish 7).